The primary structure comprises 453 residues: DNA repair protein RadA (453 aa).

Residues 10-27 (CQECGYQSPKYLGRCPNC) form a C4-type zinc finger. 95-102 (GDPGIGKS) serves as a coordination point for ATP. Positions 251 to 255 (KNRFG) match the RadA KNRFG motif motif. Positions 350–453 (DAYLKSAGGV…VGQVLKAVFS (104 aa)) are lon-protease-like.

This sequence belongs to the RecA family. RadA subfamily.

Its function is as follows. DNA-dependent ATPase involved in processing of recombination intermediates, plays a role in repairing DNA breaks. Stimulates the branch migration of RecA-mediated strand transfer reactions, allowing the 3' invading strand to extend heteroduplex DNA faster. Binds ssDNA in the presence of ADP but not other nucleotides, has ATPase activity that is stimulated by ssDNA and various branched DNA structures, but inhibited by SSB. Does not have RecA's homology-searching function. The protein is DNA repair protein RadA of Streptococcus pyogenes serotype M3 (strain ATCC BAA-595 / MGAS315).